The primary structure comprises 86 residues: Small ribosomal subunit protein bS16 (86 aa).

This sequence belongs to the bacterial ribosomal protein bS16 family.

The chain is Small ribosomal subunit protein bS16 from Bordetella bronchiseptica (strain ATCC BAA-588 / NCTC 13252 / RB50) (Alcaligenes bronchisepticus).